An 82-amino-acid polypeptide reads, in one-letter code: Toxin NaTx-13 (82 aa).

In terms of domain architecture, LCN-type CS-alpha/beta spans 6-70 (PGGYPVNQFK…KNSIEVFSCG (65 aa)). 4 disulfide bridges follow: cysteine 16–cysteine 69, cysteine 20–cysteine 44, cysteine 30–cysteine 49, and cysteine 34–cysteine 51.

It belongs to the long (4 C-C) scorpion toxin superfamily. Sodium channel inhibitor family. Expressed by the venom gland.

It is found in the secreted. Probable sodium channel inhibitor. The polypeptide is Toxin NaTx-13 (Centruroides sculpturatus (Arizona bark scorpion)).